The sequence spans 571 residues: Proline--tRNA ligase (571 aa).

Belongs to the class-II aminoacyl-tRNA synthetase family. ProS type 1 subfamily. In terms of assembly, homodimer.

It localises to the cytoplasm. It catalyses the reaction tRNA(Pro) + L-proline + ATP = L-prolyl-tRNA(Pro) + AMP + diphosphate. Catalyzes the attachment of proline to tRNA(Pro) in a two-step reaction: proline is first activated by ATP to form Pro-AMP and then transferred to the acceptor end of tRNA(Pro). As ProRS can inadvertently accommodate and process non-cognate amino acids such as alanine and cysteine, to avoid such errors it has two additional distinct editing activities against alanine. One activity is designated as 'pretransfer' editing and involves the tRNA(Pro)-independent hydrolysis of activated Ala-AMP. The other activity is designated 'posttransfer' editing and involves deacylation of mischarged Ala-tRNA(Pro). The misacylated Cys-tRNA(Pro) is not edited by ProRS. The sequence is that of Proline--tRNA ligase from Photobacterium profundum (strain SS9).